Consider the following 386-residue polypeptide: MLMYKLMSEFHLEWGITLLTLNFSYFLFNSYQIKANWPLSYSTILVSLFVLLWLTFTTQSFILFYVFFECSLIPTIILILGWGYQPERLPASYYFLFYTLLSSLPLLFIIIAHTSIYSSSFLQFWGNFMDKMIFLLAILSFLVKLPVYFAHIWLPKAHVEAPVTGSMVLAAILLKLGGYGLYLVQVLNIYSETTLMGVCLMGGIFSCLICLRQSDVKSLIAYSSVAHMSFVILGMLMSCTYTNMSSILMMVSHGICSSGLFYLSYLFYARIWSRSFLLTRSMISLFPYLCFWWLSLSFLNMGLPPSLNFFSEMYFFIGAFSLDWMVVGLSGILCFLSSCYCIYLYSSTSHGESLYIFKLISMQLKGMYNRKSSSDSVTDFNFRLLL.

Helical transmembrane passes span S8–F28, W37–T57, F61–G81, A91–I111, I133–W153, M167–L187, I189–I209, L219–C239, I247–F267, I283–L303, and F315–F335.

Belongs to the complex I subunit 4 family.

It is found in the mitochondrion membrane. The enzyme catalyses a ubiquinone + NADH + 5 H(+)(in) = a ubiquinol + NAD(+) + 4 H(+)(out). In terms of biological role, core subunit of the mitochondrial membrane respiratory chain NADH dehydrogenase (Complex I) that is believed to belong to the minimal assembly required for catalysis. Complex I functions in the transfer of electrons from NADH to the respiratory chain. The immediate electron acceptor for the enzyme is believed to be ubiquinone. In Artemia franciscana (Brine shrimp), this protein is NADH-ubiquinone oxidoreductase chain 4 (ND4).